A 156-amino-acid chain; its full sequence is Succinate dehydrogenase assembly factor 2-A, mitochondrial (156 aa).

A mitochondrion-targeting transit peptide spans 1–24 (MLRQFLVSTAVRRVVVPSMAQTRC). The segment at 35-62 (TPGEIVDYDDPPHIPVPEYPSRPDEPLE) is disordered.

The protein belongs to the SDHAF2 family. In terms of assembly, interacts with the flavoprotein subunit within the SDH catalytic dimer.

It localises to the mitochondrion matrix. Functionally, plays an essential role in the assembly of succinate dehydrogenase (SDH), an enzyme complex (also referred to as respiratory complex II) that is a component of both the tricarboxylic acid (TCA) cycle and the mitochondrial electron transport chain, and which couples the oxidation of succinate to fumarate with the reduction of ubiquinone (coenzyme Q) to ubiquinol. Required for flavinylation (covalent attachment of FAD) of the flavoprotein subunit of the SDH catalytic dimer. The chain is Succinate dehydrogenase assembly factor 2-A, mitochondrial from Drosophila ananassae (Fruit fly).